A 442-amino-acid polypeptide reads, in one-letter code: Proline--tRNA ligase (442 aa).

Belongs to the class-II aminoacyl-tRNA synthetase family. ProS type 2 subfamily. Homodimer.

It is found in the cytoplasm. It carries out the reaction tRNA(Pro) + L-proline + ATP = L-prolyl-tRNA(Pro) + AMP + diphosphate. Its function is as follows. Catalyzes the attachment of proline to tRNA(Pro) in a two-step reaction: proline is first activated by ATP to form Pro-AMP and then transferred to the acceptor end of tRNA(Pro). This chain is Proline--tRNA ligase, found in Chelativorans sp. (strain BNC1).